A 157-amino-acid chain; its full sequence is Transcription antitermination protein NusB (157 aa).

This sequence belongs to the NusB family.

In terms of biological role, involved in transcription antitermination. Required for transcription of ribosomal RNA (rRNA) genes. Binds specifically to the boxA antiterminator sequence of the ribosomal RNA (rrn) operons. The polypeptide is Transcription antitermination protein NusB (Xylella fastidiosa (strain M12)).